The primary structure comprises 75 residues: Large ribosomal subunit protein bL31 (75 aa).

This sequence belongs to the bacterial ribosomal protein bL31 family. Type A subfamily. Part of the 50S ribosomal subunit.

Functionally, binds the 23S rRNA. This is Large ribosomal subunit protein bL31 from Chlorobium phaeovibrioides (strain DSM 265 / 1930) (Prosthecochloris vibrioformis (strain DSM 265)).